An 80-amino-acid chain; its full sequence is Nuclear protein 1 (80 aa).

2 disordered regions span residues 1 to 21 and 38 to 80; these read MATL…EDED and VGGG…KAWR. Residues 61 to 80 show a composition bias toward basic and acidic residues; sequence GHERKLLTKFQNSERKKAWR. Positions 64 to 80 match the Nuclear localization signal motif; it reads RKLLTKFQNSERKKAWR.

The protein belongs to the NUPR family. As to quaternary structure, monomer. Directly interacts with MSL1 and binds MORF4L1, two components of histone acetyltransferase complex; the interaction with MORF4L1 may be mediated by MSL1. Interacts with EP300; this interaction enhances the effect of EP300 on PAX2 transcription factor activity. Interacts with PAXIP1; this interaction prevents PAXIP1 inhibition of PAX2 transcription factor activity. Interacts with COPS5; this interaction allows COPS5-dependent CDKN1B nuclear to cytoplasm translocation. Interacts with RNF2. Interacts with FOXO3; this interaction represses FOXO3 transactivation. Interacts with PTMA; regulates apoptotic process. Interacts with MYOD1, EP300 and DDX5; this interaction coordinates the association of anti-proliferative and pro-myogenic proteins at the myogenin promoter. Interacts with TP53; interaction is stress-dependent. Forms a complex with EP300 and TP53; this complex binds CDKN1A promoter leading to transcriptional induction of CDKN1A. Post-translationally, phosphorylated. Phosphorylation promotes DNA-binding activity. Acetylated. As to expression, highly expressed in pancreas and both ovaries and testes.

The protein resides in the nucleus. It localises to the cytoplasm. Its subcellular location is the perinuclear region. Transcription regulator that converts stress signals into a program of gene expression that empowers cells with resistance to the stress induced by a change in their microenvironment. Thereby participates in the regulation of many processes namely cell-cycle, apoptosis, autophagy and DNA repair responses. Controls cell cycle progression and protects cells from genotoxic stress induced by doxorubicin through the complex formation with TP53 and EP300 that binds CDKN1A promoter leading to transcriptional induction of CDKN1A. Protects pancreatic cancer cells from stress-induced cell death by binding the RELB promoter and activating its transcription, leading to IER3 transactivation. Negatively regulates apoptosis through interaction with PTMA. Inhibits autophagy-induced apoptosis in cardiac cells through FOXO3 interaction, inducing cytoplasmic translocation of FOXO3 thereby preventing the FOXO3 association with the pro-autophagic BNIP3 promoter. Inhibits cell growth and facilitates programmed cell death by apoptosis after adriamycin-induced DNA damage through transactivation of TP53. Regulates methamphetamine-induced apoptosis and autophagy through DDIT3-mediated endoplasmic reticulum stress pathway. Participates in DNA repair following gamma-irradiation by facilitating DNA access of the transcription machinery through interaction with MSL1 leading to inhibition of histone H4' Lys-16' acetylation (H4K16ac). Coactivator of PAX2 transcription factor activity, both by recruiting the EP300 cofactor to increase PAX2 transcription factor activity and by binding PAXIP1 to suppress PAXIP1-induced inhibition on PAX2. Positively regulates cell cycle progression through interaction with COPS5 inducing cytoplasmic translocation of CDKN1B leading to the CDKN1B degradation. Coordinates, through its interaction with EP300, the assiociation of MYOD1, EP300 and DDX5 to the MYOG promoter, leading to inhibition of cell-cycle progression and myogenic differentiation promotion. Negatively regulates beta cell proliferation via inhibition of cell-cycle regulatory genes expression through the suppression of their promoter activities. Also required for LHB expression and ovarian maturation. Exacerbates CNS inflammation and demyelination upon cuprizone treatment. The protein is Nuclear protein 1 of Mus musculus (Mouse).